A 443-amino-acid polypeptide reads, in one-letter code: Anamorsin homolog (443 aa).

Positions Leu-136–Gly-301 are N-terminal SAM-like domain. A linker region spans residues Asn-302–Tyr-331. [2Fe-2S] cluster contacts are provided by Cys-341, Cys-348, Cys-351, and Cys-353. The tract at residues Cys-341–Cys-353 is fe-S binding site A. Residues Cys-380, Cys-383, Cys-391, and Cys-394 each coordinate [4Fe-4S] cluster. 2 short sequence motifs (cx2C motif) span residues Cys-380–Cys-383 and Cys-391–Cys-394. A fe-S binding site B region spans residues Cys-380–Cys-394.

The protein belongs to the anamorsin family. In terms of assembly, monomer. Requires [2Fe-2S] cluster as cofactor. The cofactor is [4Fe-4S] cluster.

Its subcellular location is the cytoplasm. The protein resides in the mitochondrion intermembrane space. Component of the cytosolic iron-sulfur (Fe-S) protein assembly (CIA) machinery. Required for the maturation of extramitochondrial Fe-S proteins. Part of an electron transfer chain functioning in an early step of cytosolic Fe-S biogenesis, facilitating the de novo assembly of a [4Fe-4S] cluster on the cytosolic Fe-S scaffold complex. Electrons are transferred from NADPH via a FAD- and FMN-containing diflavin oxidoreductase. Together with the diflavin oxidoreductase, also required for the assembly of the diferric tyrosyl radical cofactor of ribonucleotide reductase (RNR), probably by providing electrons for reduction during radical cofactor maturation in the catalytic small subunit. The protein is Anamorsin homolog of Toxoplasma gondii (strain ATCC 50861 / VEG).